Here is a 271-residue protein sequence, read N- to C-terminus: Ribonuclease 3 (271 aa).

Residues 5–139 enclose the RNase III domain; it reads PALLELKLDY…IMAAIYLDGG (135 aa). Residue Glu-52 coordinates Mg(2+). Asp-56 is a catalytic residue. The Mg(2+) site is built by Asp-125 and Glu-128. The active site involves Glu-128. Positions 172–241 constitute a DRBM domain; the sequence is NFKSALQELA…ARGLYERLMG (70 aa). The disordered stretch occupies residues 241 to 271; it reads GDPIVPLPDDSPGDSPDDSGDAAESGVISAT. A compositionally biased stretch (acidic residues) spans 251–261; it reads SPGDSPDDSGD.

It belongs to the ribonuclease III family. In terms of assembly, homodimer. It depends on Mg(2+) as a cofactor.

The protein resides in the cytoplasm. It carries out the reaction Endonucleolytic cleavage to 5'-phosphomonoester.. Functionally, digests double-stranded RNA. Involved in the processing of primary rRNA transcript to yield the immediate precursors to the large and small rRNAs (23S and 16S). Processes some mRNAs, and tRNAs when they are encoded in the rRNA operon. Processes pre-crRNA and tracrRNA of type II CRISPR loci if present in the organism. The chain is Ribonuclease 3 from Solibacter usitatus (strain Ellin6076).